Reading from the N-terminus, the 170-residue chain is Ribosome maturation factor RimM (170 aa).

Residues 97-170 (NADEYYWVDL…LVVVDWDPEF (74 aa)) form the PRC barrel domain.

This sequence belongs to the RimM family. As to quaternary structure, binds ribosomal protein uS19.

The protein resides in the cytoplasm. In terms of biological role, an accessory protein needed during the final step in the assembly of 30S ribosomal subunit, possibly for assembly of the head region. Essential for efficient processing of 16S rRNA. May be needed both before and after RbfA during the maturation of 16S rRNA. It has affinity for free ribosomal 30S subunits but not for 70S ribosomes. In Stenotrophomonas maltophilia (strain R551-3), this protein is Ribosome maturation factor RimM.